A 247-amino-acid polypeptide reads, in one-letter code: NifU-like scaffold protein (247 aa).

This sequence belongs to the NifU family. As to quaternary structure, homodimer.

It is found in the plastid. The protein resides in the apicoplast. It participates in cofactor biosynthesis; iron-sulfur cluster biosynthesis. In terms of biological role, binds and transfers [4Fe-4S] iron-sulfur clusters to target proteins. The sequence is that of NifU-like scaffold protein from Plasmodium falciparum (isolate 3D7).